Here is a 187-residue protein sequence, read N- to C-terminus: UPF0301 protein Sala_0165 (187 aa).

This sequence belongs to the UPF0301 (AlgH) family.

The sequence is that of UPF0301 protein Sala_0165 from Sphingopyxis alaskensis (strain DSM 13593 / LMG 18877 / RB2256) (Sphingomonas alaskensis).